Consider the following 543-residue polypeptide: Rop guanine nucleotide exchange factor 11 (543 aa).

The segment at 61–89 is disordered; that stretch reads QPGKCGSVDRPSLPIGGVTPNRNDKLPRV. In terms of domain architecture, PRONE spans 95 to 456; sequence MEALIILQAA…QLTQEPTNNA (362 aa).

In terms of assembly, interacts with ARAC4/ROP2, ARAC3/ROP, ARAC9/ROP8, PHYA and PHYB. As to expression, highly expressed in elongating regions of roots and pollen grains. Expressed in flowers, and at lower levels in leaves and stems.

The protein localises to the cytoplasm. Guanine-nucleotide exchange factor (GEF) that acts as an activator of Rop (Rho of plants) GTPases by promoting the exchange of GDP for GTP. Functions as a light-signaling switch that functions in root growth and development through the activation of Rop in a phytochrome-dependent manner. May act as a negative regulator of phytochrome-mediated primary root development. This chain is Rop guanine nucleotide exchange factor 11 (ROPGEF11), found in Arabidopsis thaliana (Mouse-ear cress).